A 421-amino-acid chain; its full sequence is MPFGCLTLGEKKDYNSPSEVTDKYDLGQVVKSEEFCEIFRAKDRNTLKMYTCKKFNKKDGRKVRKAAKNEIMILKMVKHHNILQLVDAFETKKEYFIFLELATGREVFDWILDQGYYSERDTSNVMRQVLEAVAYLHSLKIVHRNLKNLVYFNRLKHSKIVISDFQLAKLENGLIKDPCGTPEYLAPEVIGRQRYGRPVDCWAIGVIMYILLSGNPPFYDDGDEEDSDSRDKNLFLKILSGDYEFDSPYWDDISDSAKTLVASLMEVDQDQRLTAQEAIAHEWISGNAASDKNIKDGVCAQIEKNFAKAKWKKAVRVTTLMKRLRASEQGDTGASGLAAGATGGPPDPNMPGGSLLAASIKTALSEKAADAQTSTIPSLPQPPAARPEEQQQAQQQQQAQQQQQARCNGDVPQMLPQRKGY.

The 261-residue stretch at 24 to 284 folds into the Protein kinase domain; the sequence is YDLGQVVKSE…AQEAIAHEWI (261 aa). The tract at residues 326-421 is disordered; sequence ASEQGDTGAS…PQMLPQRKGY (96 aa). Low complexity-rich tracts occupy residues 330–340 and 390–406; these read GDTGASGLAAG and QQQA…QQAR.

The protein belongs to the protein kinase superfamily. CAMK Ser/Thr protein kinase family. Interacts with calmodulin, in the presence of calcium. Ca(2+) is required as a cofactor. In terms of tissue distribution, ubiquitously expressed.

The protein localises to the cytoplasmic vesicle membrane. Does not appear to have detectable kinase activity. The chain is CaM kinase-like vesicle-associated protein (camkv) from Takifugu rubripes (Japanese pufferfish).